The primary structure comprises 45 residues: Putative potassium channel blocker (45 aa).

In terms of tissue distribution, expressed by the venom gland.

Its subcellular location is the secreted. Inhibits potassium channels. This chain is Putative potassium channel blocker, found in Hottentotta tamulus (Eastern Indian scorpion).